Consider the following 119-residue polypeptide: Mitochondrial zinc maintenance protein 1, mitochondrial (119 aa).

The N-terminal 15 residues, 1–15 (MSTSSRALAAYRNAL), are a transit peptide targeting the mitochondrion.

Belongs to the complex I LYR family. MZM1 subfamily. As to quaternary structure, interacts with RIP1.

Its subcellular location is the mitochondrion matrix. In terms of biological role, assembly factor required for Rieske Fe-S protein RIP1 incorporation into the cytochrome b-c1 (CIII) complex. Functions as a chaperone, binding to this subunit within the mitochondrial matrix and stabilizing it prior to its translocation and insertion into the late CIII dimeric intermediate within the mitochondrial inner membrane. Modulates the mitochondrial matrix zinc pool. This Eremothecium gossypii (strain ATCC 10895 / CBS 109.51 / FGSC 9923 / NRRL Y-1056) (Yeast) protein is Mitochondrial zinc maintenance protein 1, mitochondrial (MZM1).